We begin with the raw amino-acid sequence, 315 residues long: Protein LST8 homolog (315 aa).

8 WD repeats span residues 1–31 (MGDQLILATGGYDHTIKVWQAHTGNCIKTMR), 33–71 (VETSQVNALDRTPDKTRLAACGYQCIRLYDLESNCTAPV), 76–115 (GVQKNVTRLGFQEDGNWMFTAGEDHHVRIWDMISAPPHCS), 119–158 (DCESPVNAACLHPNQVEIGMGSQNGNVFLWDVKSEKHECI), 161–200 (EVDASIQDVAISPDGHYLAAANNKGNCYIWSLCSSPDQKM), 211–250 (AHTRYILRCKFSPDSRLLLTTSGDGTACLWKTSDFSKWRE), 253–292 (IENYWVWDAAFSADSKWLFTASSDGVARLWKLETKTPTRE), and 295–315 (GHTKAITALSFKDEIIRKVNH).

It belongs to the WD repeat LST8 family.

It localises to the cytoplasm. This Drosophila pseudoobscura pseudoobscura (Fruit fly) protein is Protein LST8 homolog.